Consider the following 294-residue polypeptide: Lipoyl synthase (294 aa).

Residues Cys-35, Cys-40, Cys-46, Cys-61, Cys-65, Cys-68, and Ser-275 each contribute to the [4Fe-4S] cluster site. Positions 46-264 constitute a Radical SAM core domain; that stretch reads CWGGGTATVM…REAGLGLGFR (219 aa).

This sequence belongs to the radical SAM superfamily. Lipoyl synthase family. Requires [4Fe-4S] cluster as cofactor.

The protein resides in the cytoplasm. It carries out the reaction [[Fe-S] cluster scaffold protein carrying a second [4Fe-4S](2+) cluster] + N(6)-octanoyl-L-lysyl-[protein] + 2 oxidized [2Fe-2S]-[ferredoxin] + 2 S-adenosyl-L-methionine + 4 H(+) = [[Fe-S] cluster scaffold protein] + N(6)-[(R)-dihydrolipoyl]-L-lysyl-[protein] + 4 Fe(3+) + 2 hydrogen sulfide + 2 5'-deoxyadenosine + 2 L-methionine + 2 reduced [2Fe-2S]-[ferredoxin]. Its pathway is protein modification; protein lipoylation via endogenous pathway; protein N(6)-(lipoyl)lysine from octanoyl-[acyl-carrier-protein]: step 2/2. Catalyzes the radical-mediated insertion of two sulfur atoms into the C-6 and C-8 positions of the octanoyl moiety bound to the lipoyl domains of lipoate-dependent enzymes, thereby converting the octanoylated domains into lipoylated derivatives. This chain is Lipoyl synthase, found in Anaeromyxobacter sp. (strain Fw109-5).